A 308-amino-acid polypeptide reads, in one-letter code: Protoheme IX farnesyltransferase (308 aa).

8 helical membrane passes run 20 to 40, 50 to 70, 102 to 122, 124 to 144, 149 to 169, 170 to 190, 227 to 249, and 288 to 308; these read LLAY…VTAI, AIHP…ATGA, NALA…WCAT, LLAG…YTLW, TSQN…IGWS, AITG…FFWT, LIYT…WLYG, and YLAV…PTLH.

It belongs to the UbiA prenyltransferase family. Protoheme IX farnesyltransferase subfamily.

The protein localises to the cell membrane. The catalysed reaction is heme b + (2E,6E)-farnesyl diphosphate + H2O = Fe(II)-heme o + diphosphate. The protein operates within porphyrin-containing compound metabolism; heme O biosynthesis; heme O from protoheme: step 1/1. In terms of biological role, converts heme B (protoheme IX) to heme O by substitution of the vinyl group on carbon 2 of heme B porphyrin ring with a hydroxyethyl farnesyl side group. The sequence is that of Protoheme IX farnesyltransferase from Mycobacterium bovis (strain BCG / Pasteur 1173P2).